Consider the following 264-residue polypeptide: Mediator of RNA polymerase II transcription subunit 4 (264 aa).

Positions 183–264 are disordered; that stretch reads LTKLPGQEDG…DLDLFNPDEF (82 aa). A compositionally biased stretch (basic and acidic residues) spans 200-225; it reads NEDKNIVKDAEGAEGEIRQDDKKEDD. Residues 236–264 show a composition bias toward acidic residues; that stretch reads AEGDEDKNAGEDEDEAMDSDLDLFNPDEF.

The protein belongs to the Mediator complex subunit 4 family. In terms of assembly, component of the Mediator complex.

The protein resides in the nucleus. Component of the Mediator complex, a coactivator involved in the regulated transcription of nearly all RNA polymerase II-dependent genes. Mediator functions as a bridge to convey information from gene-specific regulatory proteins to the basal RNA polymerase II transcription machinery. Mediator is recruited to promoters by direct interactions with regulatory proteins and serves as a scaffold for the assembly of a functional preinitiation complex with RNA polymerase II and the general transcription factors. The polypeptide is Mediator of RNA polymerase II transcription subunit 4 (MED4) (Candida glabrata (strain ATCC 2001 / BCRC 20586 / JCM 3761 / NBRC 0622 / NRRL Y-65 / CBS 138) (Yeast)).